Consider the following 298-residue polypeptide: MSTNAKESAGKNIKYPWWYGGAAGIFATMVTHPLDLAKVRLQAAPMPKPTLFRMLESILANEGVVGLYSGLSAAVLRQCTYTTVRFGAYDLLKENVIPREQLTNMAYLLPCSMFSGAIGGLAGNFADVVNIRMQNDSALEAAKRRNYKNAIDGVYKIYRYEGGLKTLFTGWKPNMVRGILMTASQVVTYDVFKNYLVTKLDFDASKNYTHLTASLLAGLVATTVCSPADVMKTRIMNGSGDHQPALKILADAVRKEGPSFMFRGWLPSFTRLGPFTMLIFFAIEQLKKHRVGMPKEDK.

3 Solcar repeats span residues 11-95, 103-195, and 205-289; these read KNIK…LKEN, TNMA…FKNY, and SKNY…LKKH. 6 consecutive transmembrane segments (helical) span residues 17 to 37, 58 to 76, 105 to 126, 170 to 189, 211 to 231, and 265 to 283; these read WWYG…LDLA, ILAN…AAVL, MAYL…GNFA, GWKP…VVTY, LTAS…ADVM, and WLPS…FFAI.

It belongs to the mitochondrial carrier (TC 2.A.29) family. As to quaternary structure, homodimer. Binds to the TIM22 translocation complex during import.

It localises to the mitochondrion inner membrane. Its function is as follows. Mitochondrial dicarboxylic transporter catalyzing the exchange of dicarboxylic acids like malate and succinate for inorganic phosphate. Required for growth on ethanol and acetate. This chain is Mitochondrial dicarboxylate transporter (DIC1), found in Saccharomyces cerevisiae (strain ATCC 204508 / S288c) (Baker's yeast).